Consider the following 897-residue polypeptide: DNA endonuclease RBBP8 (897 aa).

Positions 22 to 45 are essential for binding to the MRN complex and for RPA focus formation on DNA damage; sequence DLWTKLKECHDREVQGLQVKVTKL. Positions 35 to 84 form a coiled coil; that stretch reads VQGLQVKVTKLKQERILDAQRLEEFFTKNQQLREQQKVLHETIKVLEDRL. The required for interaction with LMO4, probably by stabilizing the interaction through RPPB8 dimerization stretch occupies residues 45 to 160; that stretch reads LKQERILDAQ…AELECEEDVI (116 aa). Residues Lys62 and Lys115 each participate in a glycyl lysine isopeptide (Lys-Gly) (interchain with G-Cter in SUMO2) cross-link. The stretch at 117–138 forms a coiled coil; it reads ITELMNERNTLQEENKKLSEQL. Residue Lys193 forms a Glycyl lysine isopeptide (Lys-Gly) (interchain with G-Cter in SUMO2) linkage. Phosphoserine occurs at positions 233 and 276. Positions 292–307 are enriched in basic and acidic residues; that stretch reads KQPFEESTRNTEDSLR. Positions 292 to 325 are disordered; that stretch reads KQPFEESTRNTEDSLRFSDSTSKTPPQEELPTRV. A Phosphothreonine; by CDK2 modification is found at Thr315. Residues Ser326, Ser327, and Ser349 each carry the phosphoserine modification. Residues Lys360 and Lys378 each participate in a glycyl lysine isopeptide (Lys-Gly) (interchain with G-Cter in SUMO2) cross-link. Ser379 carries the post-translational modification Phosphoserine. Glycyl lysine isopeptide (Lys-Gly) (interchain with G-Cter in SUMO2) cross-links involve residues Lys396, Lys404, and Lys410. A disordered region spans residues 419-464; it reads QNRTEYGKDSNTDKHLEPLKSLGGRTSKRKKTEEESEHEVSCPQAS. Positions 420–436 are enriched in basic and acidic residues; it reads NRTEYGKDSNTDKHLEP. Glycyl lysine isopeptide (Lys-Gly) (interchain with G-Cter in SUMO2) cross-links involve residues Lys438 and Lys449. The PXDLS motif motif lies at 490–494; it reads PLDLS. The interval 509-557 is damage-recruitment motif; that stretch reads SETSKNKFRQVTLYEALKTIPKGFSSSRKASDGNCTLPKDSPGEPCSQE. Residue Lys526 forms a Glycyl lysine isopeptide (Lys-Gly) (interchain with G-Cter in SUMO2); alternate linkage. Glycyl lysine isopeptide (Lys-Gly) (interchain with G-Cter in SUMO2) cross-links involve residues Lys530, Lys572, and Lys578. Residue Lys604 forms a Glycyl lysine isopeptide (Lys-Gly) (interchain with G-Cter in SUMO2); alternate linkage. Residues Lys613, Lys638, and Lys640 each participate in a glycyl lysine isopeptide (Lys-Gly) (interchain with G-Cter in SUMO2) cross-link. The segment at 641 to 685 is required for interaction with LMO4, probably by making physical contact with LMO4; the sequence is SLQNNQDVSFENIQWSIDPGADLSQYKMDVTVIDTKDGSQSKLGG. Position 664 is a phosphoserine; by ATM (Ser664). Lys676 is covalently cross-linked (Glycyl lysine isopeptide (Lys-Gly) (interchain with G-Cter in SUMO2)). Phosphoserine is present on Ser679. Positions 704 to 723 are disordered; the sequence is KKQEQKGEKSSNEERKMNDS. A Glycyl lysine isopeptide (Lys-Gly) (interchain with G-Cter in SUMO2) cross-link involves residue Lys719. Ser723 is subject to Phosphoserine. Ser745 is modified (phosphoserine; by ATM). Residue Lys782 forms a Glycyl lysine isopeptide (Lys-Gly) (interchain with G-Cter in SUMO2) linkage. Residues 840-842 carry the KLHL15-binding motif; sequence FRY. Thr847 bears the Phosphothreonine; by CDK1 mark. The residue at position 859 (Thr859) is a Phosphothreonine; by ATR. Lys869 is covalently cross-linked (Glycyl lysine isopeptide (Lys-Gly) (interchain with G-Cter in SUMO2)). A disordered region spans residues 873–897; that stretch reads DPCPRPKRRQPYNAIFSPKGKEQKT.

This sequence belongs to the COM1/SAE2/CtIP family. As to quaternary structure, homotetramer; formed by antiparallel association of helical extensions protruding from the N-termini of two parallel coiled-coil dimers. Forms a dumbbell-shaped particle in which polar globular domains are held about 30 nm apart by a central rod. Homotetramerization is required for DNA-end resection and repair. Interacts (via the PXDLS motif) with CTBP1; the interaction is disrupted via binding of the adenovirus E1A to CTBP1. Component of the BRCA1-RBBP8 complex. Interacts (the Ser-327 phosphorylated form) with BRCA1 (via the C-terminal BRCT domains): the interaction occurs in the G2 phase, ubiquitinates RBBP8 and involves RBBP8 in BRCA1-dependent G2/M checkpoint control on DNA damage. Interacts with RB1. Interacts with the MRN complex; interacts directly with MRE11; the interaction is required for efficient homologous recombination (HR) and regulation of the MRN complex. Interacts directly with RAD50. Interacts (when phosphorylated by CDK1) with NBN; promoting association with the MRN complex. Interacts with LM04 (via the LIM zinc-binding 1 domain). Interacts with SIAH1. Interacts with RNF138. Interacts with EXD2. Interacts with CUL3 and KLHL15; this interaction leads to RBBP8 proteasomal degradation. Directly interacts with PIN1; this interaction depends upon RBBP8 phosphorylation, predominantly at Thr-315. Interacts with FZR1; this interaction leads to APC/C-mediated RBBP8 proteasomal degradation. Interacts with AUNIP; leading to recruitment of RBBP8 to sites of DNA damage. Interacts with SAMHD1. Interacts with HDGFL2. In terms of processing, hyperphosphorylation upon ionizing radiation results in dissociation from BRCA1. Phosphorylation at Thr-847 by CDK1 is essential for the recruitment to DNA and the DNA repair function. Phosphorylation at Thr-847 and Thr-859 promote interaction with NBN and recruitment to double-strand breaks (DSBs). Phosphorylated on Ser-327 as cells enter G2 phase. This phosphorylation is required for binding BRCA1 and for the G2/M DNA damage transition checkpoint control. Phosphorylation at Thr-315, probably catalyzed by CDK2, is required for PIN1-binding, while phosphorylation at Ser-276 serves as a PIN1 isomerization site. Phosphorylation at Thr-315 is cell-cycle dependent. It steadily increases during S phase, peaks at late S/G2 phase, and drops at G1. Phosphorylation is not required for tetramerization. Binds to DNA more strongly when dephosphorylated. Ubiquitinated. Ubiquitination at multiple sites by BRCA1 (via its N-terminal RING domain) does not lead to its proteasomal degradation but instead the ubiquitinated RBBP8 binds to chromatin following DNA damage and may play a role in G2/M checkpoint control. Ubiquitinated by RNF138 at its N-terminus. Ubiquitinated through 'Lys-48' by the E3 CUL3-KLHL15 complex; this modification leads to proteasomal degradation. Ubiquitinated by the E3 FZR1/APC/C complex; this modification leads to proteasomal degradation. In terms of tissue distribution, expressed in ER-positive breast cancer lines, but tends to be down-regulated ER-negative cells (at protein level).

It is found in the nucleus. The protein resides in the chromosome. Functionally, endonuclease that cooperates with the MRE11-RAD50-NBN (MRN) complex in DNA-end resection, the first step of double-strand break (DSB) repair through the homologous recombination (HR) pathway. HR is restricted to S and G2 phases of the cell cycle and preferentially repairs DSBs resulting from replication fork collapse. Key determinant of DSB repair pathway choice, as it commits cells to HR by preventing classical non-homologous end-joining (NHEJ). Specifically promotes the endonuclease activity of the MRN complex to clear DNA ends containing protein adducts: recruited to DSBs by NBN following phosphorylation by CDK1, and promotes the endonuclease activity of MRE11 to clear protein-DNA adducts and generate clean double-strand break ends. Functions downstream of the MRN complex and ATM, promotes ATR activation and its recruitment to DSBs in the S/G2 phase facilitating the generation of ssDNA. Component of the BRCA1-RBBP8 complex that regulates CHEK1 activation and controls cell cycle G2/M checkpoints on DNA damage. During immunoglobulin heavy chain class-switch recombination, promotes microhomology-mediated alternative end joining (A-NHEJ) and plays an essential role in chromosomal translocations. Binds preferentially to DNA Y-junctions and to DNA substrates with blocked ends and promotes intermolecular DNA bridging. This Homo sapiens (Human) protein is DNA endonuclease RBBP8 (RBBP8).